Here is a 523-residue protein sequence, read N- to C-terminus: MANIEIRQETPTAFYIKVHDTDNVAIIVNDNGLKAGTRFPDGLELIEHIPQGHKVALLDIPANGEIIRYGEVIGYAVRAIPRGSWIDESMVVLPEAPPLHTLPLATKVPEPLPPLEGYTFEGYRNADGSVGTKNLLGITTSVHCVAGVVDYVVKIIERDLLPKYPNVDGVVGLNHLYGCGVAINAPAAVVPIRTIHNISLNPNFGGEVMVIGLGCEKLQPERLLTGTDDVQAIPVESASIVSLQDEKHVGFQSMVEDILQIAERHLQKLNQRQRETCPASELVVGMQCGGSDAFSGVTANPAVGYASDLLVRCGATVMFSEVTEVRDAIHLLTPRAVNEEVGKRLLEEMEWYDNYLNMGKTDRSANPSPGNKKGGLANVVEKALGSIAKSGKSAIVEVLSPGQRPTKRGLIYAATPASDFVCGTQQVASGITVQVFTTGRGTPYGLMAVPVIKMATRTELANRWFDLMDINAGTIATGEETIEEVGWKLFHFILDVASGKKKTFSDQWGLHNQLAVFNPAPVT.

Belongs to the UxaA family. Homodimer. Fe(2+) is required as a cofactor.

The catalysed reaction is galactarate = 5-dehydro-4-deoxy-D-glucarate + H2O. Its pathway is carbohydrate acid metabolism; galactarate degradation; D-glycerate from galactarate: step 1/3. Functionally, catalyzes the dehydration of galactarate to form 5-dehydro-4-deoxy-D-glucarate (5-KDG). The protein is Galactarate dehydratase (L-threo-forming) of Escherichia coli (strain K12).